An 88-amino-acid chain; its full sequence is Large ribosomal subunit protein eL31 (88 aa).

This sequence belongs to the eukaryotic ribosomal protein eL31 family.

This is Large ribosomal subunit protein eL31 (rpl31e) from Sulfurisphaera tokodaii (strain DSM 16993 / JCM 10545 / NBRC 100140 / 7) (Sulfolobus tokodaii).